A 223-amino-acid polypeptide reads, in one-letter code: uncharacterized protein (223 aa).

A run of 5 helical transmembrane segments spans residues 28–48 (LSNT…GLIT), 59–79 (LIVQ…ITLA), 88–108 (AFNQ…MFFI), 128–148 (IVGL…VWLS), and 176–196 (AWAI…YMIV).

The protein resides in the cell membrane. This is an uncharacterized protein from Mycoplasma pneumoniae (strain ATCC 29342 / M129 / Subtype 1) (Mycoplasmoides pneumoniae).